The chain runs to 126 residues: Small ribosomal subunit protein uS13 (126 aa).

A disordered region spans residues 95–126; sequence GLPVRGQRTQTNARTRKGKKKTVAGKKKAGRK. Positions 108–126 are enriched in basic residues; the sequence is RTRKGKKKTVAGKKKAGRK.

This sequence belongs to the universal ribosomal protein uS13 family. In terms of assembly, part of the 30S ribosomal subunit. Forms a loose heterodimer with protein S19. Forms two bridges to the 50S subunit in the 70S ribosome.

In terms of biological role, located at the top of the head of the 30S subunit, it contacts several helices of the 16S rRNA. In the 70S ribosome it contacts the 23S rRNA (bridge B1a) and protein L5 of the 50S subunit (bridge B1b), connecting the 2 subunits; these bridges are implicated in subunit movement. Contacts the tRNAs in the A and P-sites. The chain is Small ribosomal subunit protein uS13 from Thermobifida fusca (strain YX).